The chain runs to 417 residues: Tol-Pal system protein TolB (417 aa).

Residues 1-16 form the signal peptide; it reads MRYLWLFLIHTIGLFA.

This sequence belongs to the TolB family. As to quaternary structure, the Tol-Pal system is composed of five core proteins: the inner membrane proteins TolA, TolQ and TolR, the periplasmic protein TolB and the outer membrane protein Pal. They form a network linking the inner and outer membranes and the peptidoglycan layer.

It is found in the periplasm. Functionally, part of the Tol-Pal system, which plays a role in outer membrane invagination during cell division and is important for maintaining outer membrane integrity. This Helicobacter pylori (strain ATCC 700392 / 26695) (Campylobacter pylori) protein is Tol-Pal system protein TolB.